We begin with the raw amino-acid sequence, 438 residues long: Adenylosuccinate synthetase (438 aa).

GTP contacts are provided by residues 13–19 (GDEGKGK) and 41–43 (GHT). Asp-14 serves as the catalytic Proton acceptor. Residues Asp-14 and Gly-41 each contribute to the Mg(2+) site. Residues 14–17 (DEGK), 39–42 (NAGH), Thr-130, Arg-144, Gln-225, Thr-240, and Arg-310 contribute to the IMP site. The active-site Proton donor is the His-42. A substrate-binding site is contributed by 306–312 (ATTGRLR). GTP-binding positions include Arg-312, 338–340 (KLD), and 421–423 (STG).

It belongs to the adenylosuccinate synthetase family. As to quaternary structure, homodimer. Mg(2+) serves as cofactor.

The protein resides in the cytoplasm. It carries out the reaction IMP + L-aspartate + GTP = N(6)-(1,2-dicarboxyethyl)-AMP + GDP + phosphate + 2 H(+). It functions in the pathway purine metabolism; AMP biosynthesis via de novo pathway; AMP from IMP: step 1/2. In terms of biological role, plays an important role in the de novo pathway of purine nucleotide biosynthesis. Catalyzes the first committed step in the biosynthesis of AMP from IMP. The protein is Adenylosuccinate synthetase of Vibrio parahaemolyticus serotype O3:K6 (strain RIMD 2210633).